A 144-amino-acid polypeptide reads, in one-letter code: Small ribosomal subunit protein eS12z (144 aa).

An N-acetylserine modification is found at S2.

This sequence belongs to the eukaryotic ribosomal protein eS12 family.

The polypeptide is Small ribosomal subunit protein eS12z (RPS12A) (Arabidopsis thaliana (Mouse-ear cress)).